We begin with the raw amino-acid sequence, 351 residues long: MVPMDRLLQIVRRFEFLEARLSAGAAPAEIAALSREYAELKPVVVEISAYRTALEDLAEAEAMLSDPEMRALAEDEIPALRARIPGMEQALRLALLPKDAADARPAILEIRPGTGGEEAALFAGDLLRMYQRYAEGQGWRFELLDLAPSELGGIREATARVEGEGAFARLKYESGVHRVQRVPETEAQGRIHTSAATVAVLPEAEEVDLEIPAADLRIDTMRSSGAGGQHVNTTDSAVRITHLPTGIIVTSSEKSQHRNREIAMQVLRARLYDLERQRLADARSADRKAQVGSGDRSERIRTYNFPQGRMTDHRINLTLYALPQIMAGDLSEVISALTAHDQAARLAEMEA.

Gln229 carries the N5-methylglutamine modification.

Belongs to the prokaryotic/mitochondrial release factor family. Post-translationally, methylated by PrmC. Methylation increases the termination efficiency of RF1.

Its subcellular location is the cytoplasm. Peptide chain release factor 1 directs the termination of translation in response to the peptide chain termination codons UAG and UAA. The sequence is that of Peptide chain release factor 1 from Cereibacter sphaeroides (strain KD131 / KCTC 12085) (Rhodobacter sphaeroides).